A 363-amino-acid polypeptide reads, in one-letter code: Strychnine O-methyltransferase (363 aa).

S-adenosyl-L-methionine-binding residues include G204, D227, D249, M250, and K263. H267 functions as the Proton acceptor in the catalytic mechanism.

Belongs to the class I-like SAM-binding methyltransferase superfamily. Cation-independent O-methyltransferase family.

It carries out the reaction 10-hydroxystrychnine + S-adenosyl-L-methionine = beta-colubrine + S-adenosyl-L-homocysteine + H(+). The enzyme catalyses 11-demethylbrucine + S-adenosyl-L-methionine = brucine + S-adenosyl-L-homocysteine + H(+). It functions in the pathway alkaloid biosynthesis. Its function is as follows. O-methyltransferase involved in the biosynthesis of curare monoterpene indole alkaloids (MIAs), natural products such as strychnine, a neurotoxic compound used as a pesticide to control rodents, and its pharmacologically active derivatives, including brucine, used to regulate blood pressure. Curare alkaloids act as animal glycine receptor antagonists. Catalyzes the conversion of 10-OH strychnine to beta-colubrine, and of 11-deMe brucine to brucine. The chain is Strychnine O-methyltransferase from Strychnos nux-vomica (Poison nut).